The primary structure comprises 307 residues: Predicted GPI-anchored protein 44 (307 aa).

The signal sequence occupies residues 1 to 22 (MLSTNNLLILLIFSFLITNVKS). N-linked (GlcNAc...) asparagine glycosylation is found at Asn146 and Asn217. Positions 232–261 (TPQPLLETPSQESSAPNIDSTTPTTIDNTV) are disordered. Residues 239–254 (TPSQESSAPNIDSTTP) show a composition bias toward polar residues. Gly286 carries GPI-anchor amidated glycine lipidation. The propeptide at 287–307 (GAMGYPSISVALGLVFIAYLV) is removed in mature form.

It localises to the cell membrane. In Candida albicans (strain SC5314 / ATCC MYA-2876) (Yeast), this protein is Predicted GPI-anchored protein 44 (PGA44).